Here is a 345-residue protein sequence, read N- to C-terminus: tRNA dimethylallyltransferase (345 aa).

9–16 (GPTASGKS) contacts ATP. 11-16 (TASGKS) contributes to the substrate binding site. 2 interaction with substrate tRNA regions span residues 34 to 37 (DSMQ) and 195 to 199 (QRMIR).

Belongs to the IPP transferase family. As to quaternary structure, monomer. It depends on Mg(2+) as a cofactor.

It carries out the reaction adenosine(37) in tRNA + dimethylallyl diphosphate = N(6)-dimethylallyladenosine(37) in tRNA + diphosphate. Its function is as follows. Catalyzes the transfer of a dimethylallyl group onto the adenine at position 37 in tRNAs that read codons beginning with uridine, leading to the formation of N6-(dimethylallyl)adenosine (i(6)A). The protein is tRNA dimethylallyltransferase of Orientia tsutsugamushi (strain Boryong) (Rickettsia tsutsugamushi).